The chain runs to 521 residues: Maturase K (521 aa).

It belongs to the intron maturase 2 family. MatK subfamily.

It localises to the plastid. The protein resides in the chloroplast. Its function is as follows. Usually encoded in the trnK tRNA gene intron. Probably assists in splicing its own and other chloroplast group II introns. In Anthericum liliago (St-Bernard's lily), this protein is Maturase K.